The primary structure comprises 88 residues: Apolipoprotein C-I (88 aa).

A signal peptide spans 1 to 26 (MRLLISLPVLIVVLAMALEGPAPAQA).

This sequence belongs to the apolipoprotein C1 family.

It localises to the secreted. Inhibitor of lipoprotein binding to the low density lipoprotein (LDL) receptor, LDL receptor-related protein, and very low density lipoprotein (VLDL) receptor. Associates with high density lipoproteins (HDL) and the triacylglycerol-rich lipoproteins in the plasma and makes up about 10% of the protein of the VLDL and 2% of that of HDL. Appears to interfere directly with fatty acid uptake and is also the major plasma inhibitor of cholesteryl ester transfer protein (CETP). Modulates the interaction of APOE with beta-migrating VLDL and inhibits binding of beta-VLDL to the LDL receptor-related protein. Binds free fatty acids and reduces their intracellular esterification. This Mesocricetus auratus (Golden hamster) protein is Apolipoprotein C-I (APOC1).